The chain runs to 1358 residues: DNA-directed RNA polymerase subunit beta (1358 aa).

Belongs to the RNA polymerase beta chain family. In terms of assembly, the RNAP catalytic core consists of 2 alpha, 1 beta, 1 beta' and 1 omega subunit. When a sigma factor is associated with the core the holoenzyme is formed, which can initiate transcription.

The enzyme catalyses RNA(n) + a ribonucleoside 5'-triphosphate = RNA(n+1) + diphosphate. DNA-dependent RNA polymerase catalyzes the transcription of DNA into RNA using the four ribonucleoside triphosphates as substrates. This is DNA-directed RNA polymerase subunit beta from Methylococcus capsulatus (strain ATCC 33009 / NCIMB 11132 / Bath).